The following is a 98-amino-acid chain: Aspartyl/glutamyl-tRNA(Asn/Gln) amidotransferase subunit C (98 aa).

Belongs to the GatC family. Heterotrimer of A, B and C subunits.

It catalyses the reaction L-glutamyl-tRNA(Gln) + L-glutamine + ATP + H2O = L-glutaminyl-tRNA(Gln) + L-glutamate + ADP + phosphate + H(+). The enzyme catalyses L-aspartyl-tRNA(Asn) + L-glutamine + ATP + H2O = L-asparaginyl-tRNA(Asn) + L-glutamate + ADP + phosphate + 2 H(+). Its function is as follows. Allows the formation of correctly charged Asn-tRNA(Asn) or Gln-tRNA(Gln) through the transamidation of misacylated Asp-tRNA(Asn) or Glu-tRNA(Gln) in organisms which lack either or both of asparaginyl-tRNA or glutaminyl-tRNA synthetases. The reaction takes place in the presence of glutamine and ATP through an activated phospho-Asp-tRNA(Asn) or phospho-Glu-tRNA(Gln). This chain is Aspartyl/glutamyl-tRNA(Asn/Gln) amidotransferase subunit C, found in Microcystis aeruginosa (strain NIES-843 / IAM M-2473).